The chain runs to 95 residues: Enhancer of yellow 2 transcription factor (95 aa).

This sequence belongs to the ENY2 family. Component of the nuclear pore complex (NPC)-associated AMEX complex (anchoring and mRNA export complex), composed of at least e(y)2 and xmas-2. Component of the SAGA transcription coactivator-HAT complexes, at least composed of Ada2b, e(y)2, Pcaf/Gcn5, Taf10 and Nipped-A/Trrap. Within the SAGA complex, e(y)2, Sgf11, and not/nonstop form an additional subcomplex of SAGA called the DUB module (deubiquitination module). Component of the THO complex, composed of at least e(y)2, HPR1, THO2, THOC5, THOC6 and THOC7. Interacts with e(y)1. Interacts with su(Hw) (via zinc fingers). Interacts with xmas-2; required for localization to the nuclear periphery. Interacts with the nuclear pore complex (NPC).

It is found in the nucleus. The protein resides in the nucleoplasm. The protein localises to the cytoplasm. Functionally, involved in mRNA export coupled transcription activation by association with both the AMEX and the SAGA complexes. The SAGA complex is a multiprotein complex that activates transcription by remodeling chromatin and mediating histone acetylation and deubiquitination. Within the SAGA complex, participates in a subcomplex that specifically deubiquitinates histone H2B. The SAGA complex is recruited to specific gene promoters by activators, where it is required for transcription. Required for nuclear receptor-mediated transactivation. Involved in transcription elongation by recruiting the THO complex onto nascent mRNA. The AMEX complex functions in docking export-competent ribonucleoprotein particles (mRNPs) to the nuclear entrance of the nuclear pore complex (nuclear basket). AMEX participates in mRNA export and accurate chromatin positioning in the nucleus by tethering genes to the nuclear periphery. This is Enhancer of yellow 2 transcription factor from Drosophila virilis (Fruit fly).